Here is a 70-residue protein sequence, read N- to C-terminus: Large ribosomal subunit protein bL31 (70 aa).

Positions 16, 18, 37, and 40 each coordinate Zn(2+).

It belongs to the bacterial ribosomal protein bL31 family. Type A subfamily. As to quaternary structure, part of the 50S ribosomal subunit. Zn(2+) serves as cofactor.

Functionally, binds the 23S rRNA. The polypeptide is Large ribosomal subunit protein bL31 (Haemophilus ducreyi (strain 35000HP / ATCC 700724)).